Here is a 469-residue protein sequence, read N- to C-terminus: MTGIRAQLWIVAFGFFMQTLDTTIVNTALPSMAASLGENPLRMQSVIVSYVLTVAVMLPASGWLADRVGVKWVFFSAIILFTLGSLLCAQAETLNELISSRVIQGIGGAMMVPVGRLTVMKIVPREQYMSAMAFVTLPGQIGPLVGPALGGFLVEYASWHWIFLINLPVGVVGALATLWLMPNYTTRTRRFDISGFIMLAIGMATLTLALDGHKGLGLPPLAIAGLILCGILALAGYWWHAKGNSSALFTLRLFNNKSYSLGLIGSMSARIGSGMLPFMTPVFLQIGLGFTPFHAGLMMIPMIIGSMGMKRIIVRVVNRFGYRRVLVSATLLLAVVSLSFPLVALMGWTLLLPIVLFFQGMLNALRFSTMNTLALKDLPNRLASSGNSLLSMVMQLSMSLGVSTAGILLGVFAHNQVVTNTPATHSAFLYSYICMAIIIALPALIFNRVPADTGTNRNLPRASAKAANR.

13 consecutive transmembrane segments (helical) span residues 8-28, 45-65, 68-88, 102-122, 134-154, 161-181, 191-211, 215-235, 263-283, 286-306, 338-358, 392-412, and 426-446; these read LWIV…VNTA, SVIV…GWLA, VGVK…SLLC, VIQG…VMKI, FVTL…GFLV, WIFL…LWLM, FDIS…LALD, GLGL…LALA, LIGS…TPVF, IGLG…IIGS, LSFP…VLFF, MVMQ…LGVF, and SAFL…ALIF.

Belongs to the major facilitator superfamily. TCR/Tet family.

The protein localises to the cell inner membrane. This Yersinia enterocolitica serotype O:8 / biotype 1B (strain NCTC 13174 / 8081) protein is Putative multidrug resistance protein MdtD.